Reading from the N-terminus, the 293-residue chain is Heterogeneous nuclear ribonucleoprotein C-like 4 (293 aa).

The RRM domain maps to 16–87 (SRVFIGNLNT…QVVDINLAAE (72 aa)). Disordered stretches follow at residues 140–177 (VVPSKRQRISGNTSRRGKSGFNSKSGKRGSSKSGKLKG) and 208–293 (HCKQ…QDDS). The stretch at 177–208 (GDDLQAIKQELTQIKQKVDSLLENLEKIEKEH) forms a coiled coil. Basic and acidic residues-rich tracts occupy residues 208–222 (HCKQGVEVKNAKSEE) and 229–240 (SKKDKTHVKMES). The segment covering 242–263 (GGADDSVEEGDLLCDDDNEDQG) has biased composition (acidic residues). Residues 269–293 (LIKDDEKGAEEGEDDRDRANGQDDS) are compositionally biased toward basic and acidic residues.

Belongs to the RRM HNRPC family. RALY subfamily.

It localises to the nucleus. This Homo sapiens (Human) protein is Heterogeneous nuclear ribonucleoprotein C-like 4.